We begin with the raw amino-acid sequence, 141 residues long: Small ribosomal subunit protein uS12 (141 aa).

The protein belongs to the universal ribosomal protein uS12 family. In terms of assembly, part of the 30S ribosomal subunit.

Functionally, with S4 and S5 plays an important role in translational accuracy. Located at the interface of the 30S and 50S subunits. This Methanothermobacter thermautotrophicus (strain ATCC 29096 / DSM 1053 / JCM 10044 / NBRC 100330 / Delta H) (Methanobacterium thermoautotrophicum) protein is Small ribosomal subunit protein uS12.